Here is a 113-residue protein sequence, read N- to C-terminus: Large ribosomal subunit protein uL22 (113 aa).

This sequence belongs to the universal ribosomal protein uL22 family. In terms of assembly, part of the 50S ribosomal subunit.

This protein binds specifically to 23S rRNA; its binding is stimulated by other ribosomal proteins, e.g. L4, L17, and L20. It is important during the early stages of 50S assembly. It makes multiple contacts with different domains of the 23S rRNA in the assembled 50S subunit and ribosome. In terms of biological role, the globular domain of the protein is located near the polypeptide exit tunnel on the outside of the subunit, while an extended beta-hairpin is found that lines the wall of the exit tunnel in the center of the 70S ribosome. The sequence is that of Large ribosomal subunit protein uL22 from Mycoplasmopsis synoviae (strain 53) (Mycoplasma synoviae).